A 406-amino-acid polypeptide reads, in one-letter code: 1-deoxy-D-xylulose 5-phosphate reductoisomerase (406 aa).

NADPH is bound by residues threonine 21, glycine 22, serine 23, isoleucine 24, glycine 47, glutamine 50, and asparagine 127. A 1-deoxy-D-xylulose 5-phosphate-binding site is contributed by lysine 128. Glutamate 129 contributes to the NADPH binding site. Residue aspartate 151 participates in Mn(2+) binding. 1-deoxy-D-xylulose 5-phosphate-binding residues include serine 152, glutamate 153, serine 177, and histidine 200. A Mn(2+)-binding site is contributed by glutamate 153. Glycine 206 contacts NADPH. Residues serine 213, asparagine 218, lysine 219, and glutamate 222 each coordinate 1-deoxy-D-xylulose 5-phosphate. Glutamate 222 is a Mn(2+) binding site.

Belongs to the DXR family. Mg(2+) serves as cofactor. It depends on Mn(2+) as a cofactor.

It catalyses the reaction 2-C-methyl-D-erythritol 4-phosphate + NADP(+) = 1-deoxy-D-xylulose 5-phosphate + NADPH + H(+). It participates in isoprenoid biosynthesis; isopentenyl diphosphate biosynthesis via DXP pathway; isopentenyl diphosphate from 1-deoxy-D-xylulose 5-phosphate: step 1/6. In terms of biological role, catalyzes the NADPH-dependent rearrangement and reduction of 1-deoxy-D-xylulose-5-phosphate (DXP) to 2-C-methyl-D-erythritol 4-phosphate (MEP). The protein is 1-deoxy-D-xylulose 5-phosphate reductoisomerase of Mycobacterium leprae (strain Br4923).